Here is a 77-residue protein sequence, read N- to C-terminus: RNA-binding protein Hfq (77 aa).

One can recognise a Sm domain in the interval 10 to 70 (DAFLNHVRKA…ISTIMPGQPI (61 aa)).

This sequence belongs to the Hfq family. In terms of assembly, homohexamer.

In terms of biological role, RNA chaperone that binds small regulatory RNA (sRNAs) and mRNAs to facilitate mRNA translational regulation in response to envelope stress, environmental stress and changes in metabolite concentrations. Also binds with high specificity to tRNAs. The chain is RNA-binding protein Hfq from Cereibacter sphaeroides (strain ATCC 17029 / ATH 2.4.9) (Rhodobacter sphaeroides).